Consider the following 365-residue polypeptide: UDP-N-acetylglucosamine--N-acetylmuramyl-(pentapeptide) pyrophosphoryl-undecaprenol N-acetylglucosamine transferase (365 aa).

UDP-N-acetyl-alpha-D-glucosamine contacts are provided by residues 13–15 (TGG), asparagine 125, arginine 165, serine 192, and glutamine 293.

The protein belongs to the glycosyltransferase 28 family. MurG subfamily.

It localises to the cell inner membrane. The enzyme catalyses di-trans,octa-cis-undecaprenyl diphospho-N-acetyl-alpha-D-muramoyl-L-alanyl-D-glutamyl-meso-2,6-diaminopimeloyl-D-alanyl-D-alanine + UDP-N-acetyl-alpha-D-glucosamine = di-trans,octa-cis-undecaprenyl diphospho-[N-acetyl-alpha-D-glucosaminyl-(1-&gt;4)]-N-acetyl-alpha-D-muramoyl-L-alanyl-D-glutamyl-meso-2,6-diaminopimeloyl-D-alanyl-D-alanine + UDP + H(+). It participates in cell wall biogenesis; peptidoglycan biosynthesis. Cell wall formation. Catalyzes the transfer of a GlcNAc subunit on undecaprenyl-pyrophosphoryl-MurNAc-pentapeptide (lipid intermediate I) to form undecaprenyl-pyrophosphoryl-MurNAc-(pentapeptide)GlcNAc (lipid intermediate II). This chain is UDP-N-acetylglucosamine--N-acetylmuramyl-(pentapeptide) pyrophosphoryl-undecaprenol N-acetylglucosamine transferase, found in Ruegeria pomeroyi (strain ATCC 700808 / DSM 15171 / DSS-3) (Silicibacter pomeroyi).